Reading from the N-terminus, the 341-residue chain is Putative ubiquitin-like-specific protease 1B (341 aa).

Residues His-231, Asp-248, and Cys-300 contribute to the active site.

The protein belongs to the peptidase C48 family.

In terms of biological role, protease that catalyzes two essential functions in the SUMO pathway: processing of full-length SUMOs to their mature forms and deconjugation of SUMO from targeted proteins. The protein is Putative ubiquitin-like-specific protease 1B (ULP1B) of Arabidopsis thaliana (Mouse-ear cress).